Reading from the N-terminus, the 227-residue chain is 2-C-methyl-D-erythritol 4-phosphate cytidylyltransferase (227 aa).

This sequence belongs to the IspD/TarI cytidylyltransferase family. IspD subfamily.

The enzyme catalyses 2-C-methyl-D-erythritol 4-phosphate + CTP + H(+) = 4-CDP-2-C-methyl-D-erythritol + diphosphate. It functions in the pathway isoprenoid biosynthesis; isopentenyl diphosphate biosynthesis via DXP pathway; isopentenyl diphosphate from 1-deoxy-D-xylulose 5-phosphate: step 2/6. Functionally, catalyzes the formation of 4-diphosphocytidyl-2-C-methyl-D-erythritol from CTP and 2-C-methyl-D-erythritol 4-phosphate (MEP). The protein is 2-C-methyl-D-erythritol 4-phosphate cytidylyltransferase of Dehalococcoides mccartyi (strain ATCC BAA-2266 / KCTC 15142 / 195) (Dehalococcoides ethenogenes (strain 195)).